A 493-amino-acid chain; its full sequence is Transcript termination protein A18 (493 aa).

Positions 100 to 256 constitute a Helicase ATP-binding domain; the sequence is MIESKRPLYI…NSIINIAKLS (157 aa). 113–120 is an ATP binding site; sequence LACGFGKT. Positions 206-209 match the DESH box motif; the sequence is DESH.

The protein belongs to the helicase family. Poxviruses subfamily. In terms of assembly, interacts with G2. Might be part of a transcription complex composed at least of G2, A18, and H5.

Its subcellular location is the virion. Functionally, DNA helicase which seems to act as a postreplicative transcription termination factor. Involved in ATP-dependent release of nascent RNA. Forms a stable complex with single-stranded DNA, and to a lesser extent RNA. This Homo sapiens (Human) protein is Transcript termination protein A18.